The sequence spans 327 residues: Transaldolase (327 aa).

The active-site Schiff-base intermediate with substrate is Lys-132.

This sequence belongs to the transaldolase family. Type 1 subfamily.

The protein localises to the cytoplasm. The enzyme catalyses D-sedoheptulose 7-phosphate + D-glyceraldehyde 3-phosphate = D-erythrose 4-phosphate + beta-D-fructose 6-phosphate. It functions in the pathway carbohydrate degradation; pentose phosphate pathway; D-glyceraldehyde 3-phosphate and beta-D-fructose 6-phosphate from D-ribose 5-phosphate and D-xylulose 5-phosphate (non-oxidative stage): step 2/3. Functionally, transaldolase is important for the balance of metabolites in the pentose-phosphate pathway. The polypeptide is Transaldolase (Chlamydia trachomatis serovar D (strain ATCC VR-885 / DSM 19411 / UW-3/Cx)).